The primary structure comprises 371 residues: UDP-N-acetylglucosamine--N-acetylmuramyl-(pentapeptide) pyrophosphoryl-undecaprenol N-acetylglucosamine transferase (371 aa).

UDP-N-acetyl-alpha-D-glucosamine contacts are provided by residues 10–12, Asn124, Arg166, Ser196, and Gln301; that span reads TGG.

It belongs to the glycosyltransferase 28 family. MurG subfamily.

The protein resides in the cell membrane. It carries out the reaction di-trans,octa-cis-undecaprenyl diphospho-N-acetyl-alpha-D-muramoyl-L-alanyl-D-glutamyl-meso-2,6-diaminopimeloyl-D-alanyl-D-alanine + UDP-N-acetyl-alpha-D-glucosamine = di-trans,octa-cis-undecaprenyl diphospho-[N-acetyl-alpha-D-glucosaminyl-(1-&gt;4)]-N-acetyl-alpha-D-muramoyl-L-alanyl-D-glutamyl-meso-2,6-diaminopimeloyl-D-alanyl-D-alanine + UDP + H(+). Its pathway is cell wall biogenesis; peptidoglycan biosynthesis. Cell wall formation. Catalyzes the transfer of a GlcNAc subunit on undecaprenyl-pyrophosphoryl-MurNAc-pentapeptide (lipid intermediate I) to form undecaprenyl-pyrophosphoryl-MurNAc-(pentapeptide)GlcNAc (lipid intermediate II). The sequence is that of UDP-N-acetylglucosamine--N-acetylmuramyl-(pentapeptide) pyrophosphoryl-undecaprenol N-acetylglucosamine transferase from Moorella thermoacetica (strain ATCC 39073 / JCM 9320).